Here is a 75-residue protein sequence, read N- to C-terminus: Disintegrin CTF-II (75 aa).

Positions 1-75 constitute a Disintegrin domain; that stretch reads ELLEEGEDCY…SDDCPRWNDL (75 aa). Disulfide bonds link cysteine 9–cysteine 24, cysteine 11–cysteine 19, cysteine 18–cysteine 41, cysteine 32–cysteine 38, cysteine 37–cysteine 62, and cysteine 50–cysteine 69. A Cell attachment site motif is present at residues 54-56; it reads RGD.

The protein belongs to the venom metalloproteinase (M12B) family. P-II subfamily. P-IIa sub-subfamily. In terms of assembly, monomer (disintegrin). Expressed by the venom gland.

Its subcellular location is the secreted. In terms of biological role, inhibits fibrinogen interaction with platelet receptors, and inhibits aggregation induced by ADP, thrombin, collagen and platelet-activating factor. Acts by binding to the alpha-IIb/beta-3 (ITGA2B/ITGB3) on the platelet surface. This Protobothrops flavoviridis (Habu) protein is Disintegrin CTF-II.